The chain runs to 136 residues: Frataxin, mitochondrial (136 aa).

The protein belongs to the frataxin family. Monomer. Oligomer.

It is found in the mitochondrion. The catalysed reaction is 4 Fe(2+) + O2 + 4 H(+) = 4 Fe(3+) + 2 H2O. Its function is as follows. Promotes the biosynthesis of heme as well as the assembly and repair of iron-sulfur clusters by delivering Fe(2+) to proteins involved in these pathways. May play a role in the protection against iron-catalyzed oxidative stress through its ability to catalyze the oxidation of Fe(2+) to Fe(3+). May be able to store large amounts of the metal in the form of a ferrihydrite mineral by oligomerization. This Caenorhabditis elegans protein is Frataxin, mitochondrial (frh-1).